Reading from the N-terminus, the 803-residue chain is Ras GTPase-activating protein 4B (803 aa).

2 C2 domains span residues 1-105 (MAKR…SGWA) and 116-232 (VQGE…EGWF). Positions 21, 27, 74, 76, 79, 82, 149, 155, 202, 204, 207, and 210 each coordinate Ca(2+). Positions 318 to 546 (GLAKDFLDLL…AQLKDFITKL (229 aa)) constitute a Ras-GAP domain. Residues 566–673 (PPVKEGPLFI…WLSALRKVSI (108 aa)) enclose the PH domain. The Btk-type zinc-finger motif lies at 675–711 (NTGLLGSYHPGVFRGDKWSCCHQKEKTGQGCDKTRSR). 4 residues coordinate Zn(2+): H683, C694, C695, and C705. A disordered region spans residues 781–803 (EAHSSSPAGSPPSEPNCLLELQT).

Ca(2+) is required as a cofactor.

The protein localises to the cytoplasm. The protein resides in the cytosol. Its subcellular location is the cell membrane. Its function is as follows. Ca(2+)-dependent Ras GTPase-activating protein, that may play a role in the Ras-MAPK pathway. In Homo sapiens (Human), this protein is Ras GTPase-activating protein 4B (RASA4B).